The following is a 429-amino-acid chain: Glutamate-1-semialdehyde 2,1-aminomutase (429 aa).

At K265 the chain carries N6-(pyridoxal phosphate)lysine.

This sequence belongs to the class-III pyridoxal-phosphate-dependent aminotransferase family. HemL subfamily. Homodimer. Requires pyridoxal 5'-phosphate as cofactor.

The protein resides in the cytoplasm. It carries out the reaction (S)-4-amino-5-oxopentanoate = 5-aminolevulinate. The protein operates within porphyrin-containing compound metabolism; protoporphyrin-IX biosynthesis; 5-aminolevulinate from L-glutamyl-tRNA(Glu): step 2/2. In Legionella pneumophila subsp. pneumophila (strain Philadelphia 1 / ATCC 33152 / DSM 7513), this protein is Glutamate-1-semialdehyde 2,1-aminomutase.